We begin with the raw amino-acid sequence, 252 residues long: tRNA (guanine-N(1)-)-methyltransferase (252 aa).

S-adenosyl-L-methionine is bound by residues G113 and 133 to 138 (VGDFVL).

This sequence belongs to the RNA methyltransferase TrmD family. Homodimer.

Its subcellular location is the cytoplasm. It carries out the reaction guanosine(37) in tRNA + S-adenosyl-L-methionine = N(1)-methylguanosine(37) in tRNA + S-adenosyl-L-homocysteine + H(+). Its function is as follows. Specifically methylates guanosine-37 in various tRNAs. This is tRNA (guanine-N(1)-)-methyltransferase from Francisella tularensis subsp. holarctica (strain FTNF002-00 / FTA).